The sequence spans 130 residues: Large ribosomal subunit protein eL32 (130 aa).

This sequence belongs to the eukaryotic ribosomal protein eL32 family.

This Pyrococcus horikoshii (strain ATCC 700860 / DSM 12428 / JCM 9974 / NBRC 100139 / OT-3) protein is Large ribosomal subunit protein eL32 (rpl32e).